We begin with the raw amino-acid sequence, 696 residues long: SEC14 domain and spectrin repeat-containing protein 1 (696 aa).

The CRAL-TRIO domain maps to 1-153; sequence MEASVILPIL…DFGGSLTYDH (153 aa). Spectrin repeat units lie at residues 275–378, 381–494, and 500–602; these read EEIQ…NLLQ, LEFH…LKML, and FKCE…HRLE.

The protein belongs to the SOLO family. Interacts (via the spectrin 1 repeat) with TRPC4 and TRPC5 (via CIRB domain). Interacts with CTNNB1.

In terms of biological role, may act as the primary docking protein directing membrane turnover and assembly of the transient receptor potential channels TRPC4 and TRPC5. Binds phospholipids such as phosphatidylinositol monophosphates, phosphatidylinositol diphosphates (PIP2s) and phosphatidic acid, but not less polar lipids including phosphatidylcholine, phosphatidylserine, and phosphatidylinositol. The binding to PIP2s is calcium dependent. Might be involved in the plasma membrane localization of CTNNB1. This is SEC14 domain and spectrin repeat-containing protein 1 (Sestd1) from Mus musculus (Mouse).